A 213-amino-acid chain; its full sequence is ATP phosphoribosyltransferase (213 aa).

Belongs to the ATP phosphoribosyltransferase family. Short subfamily. Heteromultimer composed of HisG and HisZ subunits.

It localises to the cytoplasm. The catalysed reaction is 1-(5-phospho-beta-D-ribosyl)-ATP + diphosphate = 5-phospho-alpha-D-ribose 1-diphosphate + ATP. It participates in amino-acid biosynthesis; L-histidine biosynthesis; L-histidine from 5-phospho-alpha-D-ribose 1-diphosphate: step 1/9. Its function is as follows. Catalyzes the condensation of ATP and 5-phosphoribose 1-diphosphate to form N'-(5'-phosphoribosyl)-ATP (PR-ATP). Has a crucial role in the pathway because the rate of histidine biosynthesis seems to be controlled primarily by regulation of HisG enzymatic activity. The chain is ATP phosphoribosyltransferase from Saccharophagus degradans (strain 2-40 / ATCC 43961 / DSM 17024).